A 391-amino-acid chain; its full sequence is Multidrug resistance protein MdtL (391 aa).

The next 12 helical transmembrane spans lie at 4-24 (FLICSFALVLLYPAGIDMYLV), 42-62 (IAFSVYLAGMAAAMLFAGKVA), 69-89 (PVAIPGAALFIIASVFCSLAE), 93-113 (LFLAGRFLQGLGAGCCYVVAF), 131-151 (LLNGITCIIPVLAPVLGHLIM), 158-178 (SLFWAMATMGIAVLMLSLFIL), 203-222 (FFLSRVVITTLSVSVILTFV), 245-265 (ALTAGVSMTVSFSTPFALGIF), 269-289 (TLMITSQVLFLAAGITLAVSP), 293-313 (ISLFGITLICAGFSIGFGVAM), 324-346 (AGVASSTLGIAQVCGSSLWIWLA), and 363-383 (ACSIVSLLLIMFVTPGRPVAA).

Belongs to the major facilitator superfamily. DHA1 family. MdtL (TC 2.A.1.2.22) subfamily.

Its subcellular location is the cell inner membrane. Functionally, confers resistance to chloramphenicol. This is Multidrug resistance protein MdtL from Escherichia fergusonii (strain ATCC 35469 / DSM 13698 / CCUG 18766 / IAM 14443 / JCM 21226 / LMG 7866 / NBRC 102419 / NCTC 12128 / CDC 0568-73).